The sequence spans 266 residues: MLQRELTRLQNGWLSRDGVWHTDTDKLADLRALRDTLAAHPGTSLILLDTASDPRKVLAAVGVGDVDNAERVGVTMGGLNTRVSSSVGDMVKEAGIQRAKAAELRERAGWPNYDAVASIAWLGYDAPDGLKDVMHDWSARDAAGPLNRFDKGLAATTNVSDQHITAFGHSYGSLVTSLALQQGAPVSDVVLYGSPGTELTHASQLGVEPGHAFYMIGVNDHVANTIPEFGAFGSAPQDVPGMTQLSVNTGLAPGPLLGDGQLHERA.

This is an uncharacterized protein from Mycobacterium tuberculosis (strain CDC 1551 / Oshkosh).